Consider the following 283-residue polypeptide: Shikimate dehydrogenase (NADP(+)) (283 aa).

Shikimate contacts are provided by residues 19 to 21 (SRS) and T66. K70 acts as the Proton acceptor in catalysis. E82 contacts NADP(+). Residues N91 and D107 each coordinate shikimate. NADP(+) contacts are provided by residues 133–137 (GAGGA) and I226. Y228 contacts shikimate. Position 249 (G249) interacts with NADP(+).

Belongs to the shikimate dehydrogenase family. Homodimer.

The catalysed reaction is shikimate + NADP(+) = 3-dehydroshikimate + NADPH + H(+). The protein operates within metabolic intermediate biosynthesis; chorismate biosynthesis; chorismate from D-erythrose 4-phosphate and phosphoenolpyruvate: step 4/7. Its function is as follows. Involved in the biosynthesis of the chorismate, which leads to the biosynthesis of aromatic amino acids. Catalyzes the reversible NADPH linked reduction of 3-dehydroshikimate (DHSA) to yield shikimate (SA). The chain is Shikimate dehydrogenase (NADP(+)) from Rhodospirillum rubrum (strain ATCC 11170 / ATH 1.1.1 / DSM 467 / LMG 4362 / NCIMB 8255 / S1).